The primary structure comprises 390 residues: Homoserine O-acetyltransferase (390 aa).

Residues 55 to 366 (NAILINHAFS…ESDCGHDAFL (312 aa)) enclose the AB hydrolase-1 domain. S163 acts as the Nucleophile in catalysis. R232 is a binding site for substrate. Catalysis depends on residues D329 and H362. D363 is a binding site for substrate.

This sequence belongs to the AB hydrolase superfamily. MetX family. In terms of assembly, homodimer.

Its subcellular location is the cytoplasm. The catalysed reaction is L-homoserine + acetyl-CoA = O-acetyl-L-homoserine + CoA. The protein operates within amino-acid biosynthesis; L-methionine biosynthesis via de novo pathway; O-acetyl-L-homoserine from L-homoserine: step 1/1. Its function is as follows. Transfers an acetyl group from acetyl-CoA to L-homoserine, forming acetyl-L-homoserine. In Desulfotalea psychrophila (strain LSv54 / DSM 12343), this protein is Homoserine O-acetyltransferase.